Consider the following 225-residue polypeptide: Protein ZW2 (225 aa).

A DOG1 domain is found at 7 to 225 (SETFASFFND…FYLRLRDLGV (219 aa)).

May be involved in the regulation of abscisic acid (ABA) sensitivity. In Arabidopsis thaliana (Mouse-ear cress), this protein is Protein ZW2.